We begin with the raw amino-acid sequence, 441 residues long: ATP-dependent protease ATPase subunit HslU (441 aa).

ATP contacts are provided by residues isoleucine 18, 60-65 (GVGKTE), aspartate 254, glutamate 319, and arginine 391.

It belongs to the ClpX chaperone family. HslU subfamily. A double ring-shaped homohexamer of HslV is capped on each side by a ring-shaped HslU homohexamer. The assembly of the HslU/HslV complex is dependent on binding of ATP.

It is found in the cytoplasm. Functionally, ATPase subunit of a proteasome-like degradation complex; this subunit has chaperone activity. The binding of ATP and its subsequent hydrolysis by HslU are essential for unfolding of protein substrates subsequently hydrolyzed by HslV. HslU recognizes the N-terminal part of its protein substrates and unfolds these before they are guided to HslV for hydrolysis. This is ATP-dependent protease ATPase subunit HslU from Shewanella piezotolerans (strain WP3 / JCM 13877).